An 88-amino-acid chain; its full sequence is Acyl-CoA-binding domain-containing protein 7 (88 aa).

An ACB domain is found at 3–88; that stretch reads LQADFDRAAE…AKELIEKYGI (86 aa). An acyl-CoA is bound by residues Arg15, 30–34, Lys56, and Tyr75; that span reads YGLYK.

This sequence belongs to the ACBD7 family.

Its function is as follows. Binds medium- and long-chain acyl-CoA esters. This chain is Acyl-CoA-binding domain-containing protein 7 (ACBD7), found in Homo sapiens (Human).